Here is a 149-residue protein sequence, read N- to C-terminus: Nucleoside diphosphate kinase (149 aa).

6 residues coordinate ATP: Lys-9, Phe-57, Arg-85, Thr-91, Arg-102, and Asn-112. His-115 serves as the catalytic Pros-phosphohistidine intermediate.

Belongs to the NDK family. Homotetramer. Mg(2+) is required as a cofactor.

Its subcellular location is the cytoplasm. It catalyses the reaction a 2'-deoxyribonucleoside 5'-diphosphate + ATP = a 2'-deoxyribonucleoside 5'-triphosphate + ADP. It carries out the reaction a ribonucleoside 5'-diphosphate + ATP = a ribonucleoside 5'-triphosphate + ADP. Functionally, major role in the synthesis of nucleoside triphosphates other than ATP. The ATP gamma phosphate is transferred to the NDP beta phosphate via a ping-pong mechanism, using a phosphorylated active-site intermediate. In Desulfitobacterium hafniense (strain Y51), this protein is Nucleoside diphosphate kinase.